The chain runs to 138 residues: UPF0201 protein PYRAB09730 (138 aa).

It belongs to the UPF0201 family.

The sequence is that of UPF0201 protein PYRAB09730 from Pyrococcus abyssi (strain GE5 / Orsay).